A 524-amino-acid chain; its full sequence is Cytochrome c nitrite reductase subunit NrfA (524 aa).

Positions Met1–Thr24 are cleaved as a signal peptide. The interval Asp29–Tyr39 is interaction with NrfH. Gly78, Glu117, and Ala118 together coordinate Ca(2+). The heme site is built by His121, Cys147, Cys150, Lys151, Cys187, Cys190, and His191. Residues Arg221–Asn222 form an interaction with NrfH region. Heme contacts are provided by Cys229, Cys232, and His233. Positions 235, 236, 295, and 297 each coordinate Ca(2+). Residues His309, Cys316, Cys319, His320, His335, Cys349, Cys352, His353, and His434 each contribute to the heme site. Residues Asp318 to Lys331 form an interaction with NrfH region. Positions Gln351–Asp355 are interaction with NrfH.

It belongs to the cytochrome c-552 family. In terms of assembly, component of the NrfHA cytochrome c nitrite reductase complex composed of 4 NrfA catalytic subunits and 2 NrfH quinone-binding subunits. NrfA homodimer interacts with NrfH. The cofactor is Ca(2+). Heme serves as cofactor.

The protein localises to the cell inner membrane. It catalyses the reaction 6 Fe(III)-[cytochrome c] + NH4(+) + 2 H2O = 6 Fe(II)-[cytochrome c] + nitrite + 8 H(+). Functionally, catalytic subunit of the cytochrome c nitrite reductase holocomplex NrfHA. Has both nitrite and sulfite reductase activities. Catalyzes the reduction of nitrite to ammonia, consuming six electrons acquired by the electron donor subunit NrfH from the menaquinone pool, in an anaerobic respiratory process of nitrite. The other biological function of the NrfHA holocomplex is to detoxify nitrite. This function is essential for the survival of this organism as it enables it to overcome inhibition by nitrite, which is produced by other organisms living in the same environment. The sequence is that of Cytochrome c nitrite reductase subunit NrfA from Nitratidesulfovibrio vulgaris (strain ATCC 29579 / DSM 644 / CCUG 34227 / NCIMB 8303 / VKM B-1760 / Hildenborough) (Desulfovibrio vulgaris).